Reading from the N-terminus, the 181-residue chain is UPF0302 protein LMHCC_0635 (181 aa).

This sequence belongs to the UPF0302 family.

In Listeria monocytogenes serotype 4a (strain HCC23), this protein is UPF0302 protein LMHCC_0635.